The chain runs to 608 residues: MSAVFDASAFLATCSNRPGVYRMFDAEAKLLYVGKAKSLKKRLASYFRKSGLAPKTAALVARIAQVETTITANETEALLLEQTLIKEWRPPYNILLRDDKSYPFVFLSSEDEYPRLSLHRGAKKRKGRYFGPYPSAGAIRESLNLLQKAFLVRQCEDSYFRNRTRPCLQYQIKRCKGPCVGLVSPEEYAEDVRHSVMFLEGRSNALADELNVGMEQAAMRLDFEKAAELRDQVAILRRVQDQQSMEGGNGDVDIVAAIVTPGGACVHLISVRGGRVLGSKNFFPQVAIEEEVGEVLLAFLGQYYLSHQERDLPAELIVNVTHEDFPVLVSAIAEARGRELEISYRVRGTRARWQQLAVTNAEQALGARLANRQHVAARFEALAEALDLAEPPQRLECFDISHSSGEATVASCVVFGPEGPLKSDYRRYNIEGVTAGDDYAAMHQALTRRFSRLKDGEGKMPDILLVDGGKGQLAMAQEVLQELAVAGLILLGVAKGVTRKPGLETLYLNDASHEFTLPADSPALHLIQQIRDEAHRFAITGHRARRGKARRTSTLEDVPGVGPKRRRDLLKHFGGLQELSRASIDELAKAPGISKKLAEQIYAVLHSE.

The GIY-YIG domain maps to 16–94 (NRPGVYRMFD…IKEWRPPYNI (79 aa)). The region spanning 204-239 (NALADELNVGMEQAAMRLDFEKAAELRDQVAILRRV) is the UVR domain.

Belongs to the UvrC family. In terms of assembly, interacts with UvrB in an incision complex.

It localises to the cytoplasm. Functionally, the UvrABC repair system catalyzes the recognition and processing of DNA lesions. UvrC both incises the 5' and 3' sides of the lesion. The N-terminal half is responsible for the 3' incision and the C-terminal half is responsible for the 5' incision. The polypeptide is UvrABC system protein C (Pseudomonas aeruginosa (strain ATCC 15692 / DSM 22644 / CIP 104116 / JCM 14847 / LMG 12228 / 1C / PRS 101 / PAO1)).